The sequence spans 678 residues: WD repeat-containing protein 48 (678 aa).

8 WD repeats span residues 28 to 67 (YNRNGVNALQLDPALNRLFTAGRDSIIRIWNVNQHKQDPY), 73 to 112 (HHTDWVNDIVLCCNGKTLISASSDTTVKVWNAHKGFCMST), 115 to 154 (THKDYVKALAYAKDKELVASAGLDRQIFLWDVNTLTALTA), 166 to 205 (GNKDSIYSLAMNQMGTVIVSGSTEKVLRVWDPRTCQKLMK), 208 to 247 (GHTDNVKALLLNRDGTQCLSGSSDGTIRLWSLGQQRCIAT), 250 to 289 (VHDEGVWALQVNEGFTHVYSGGRDRKIYCTDLRNPDIRLL), 292 to 334 (EEKA…NFRS), and 358 to 397 (KGGASIIQCNILNDKRHILTKDTNNNVAYWDVLKACKVED). Residues 608–629 (VDTESQTTSSSNNEKPGEQEKE) form a disordered region. Residues 610-621 (TESQTTSSSNNE) are compositionally biased toward low complexity.

This sequence belongs to the WD repeat WDR48 family.

The protein localises to the nucleus. The protein resides in the cytoplasm. It localises to the lysosome. It is found in the late endosome. Functionally, regulator of deubiquitinating complexes, which acts as a strong activator of usp1, usp12 and usp46. Enhances the usp1-mediated deubiquitination of fancd2; usp1 being almost inactive by itself. Activates deubiquitination by increasing the catalytic turnover without increasing the affinity of deubiquitinating enzymes for the substrate. Also activates deubiquitinating activity of complexes containing usp12. Together with rad51ap1, promotes DNA repair by stimulating rad51-mediated homologous recombination. Binds single-stranded DNA (ssDNA) and double-stranded DNA (dsDNA). DNA-binding is required both for usp1-mediated deubiquitination of fancd2 and stimulation of rad51-mediated homologous recombination: both wdr48/uaf1 and rad51ap1 have coordinated role in DNA-binding during these processes. Together with atad5 and by regulating usp1 activity, has a role in pcna-mediated translesion synthesis (TLS) by deubiquitinating monoubiquitinated pcna. Together with atad5, has a role in recruiting rad51 to stalled forks during replication stress. This is WD repeat-containing protein 48 (wdr48) from Xenopus tropicalis (Western clawed frog).